The primary structure comprises 274 residues: MTQASLIRLSELNNDAQYNLNDTSMYNPVGAAAYGVNGDKIGTVRDALVEPETGRIRYFLVDVGGWFSSKEVLVPVGYGRVDDSGVYFDSLTKDQVKDMSEYRADQAYSSEMMDTDERVLRGNQSQEEYHQRAYQTPDRLQLLEERLVVNKDRFKAGSVQIGKRIETRQETVSVPLQREEVVIERHAVTDGRAVEGAVLGEGHQTMSVDLEAERANISKQAYVTEEVSVGKRAVTETQQVTETVGREVLDVNQTGDVRTTEGTALTDDTTKRNI.

Residues 253 to 274 form a disordered region; that stretch reads QTGDVRTTEGTALTDDTTKRNI.

This is an uncharacterized protein from Deinococcus radiodurans (strain ATCC 13939 / DSM 20539 / JCM 16871 / CCUG 27074 / LMG 4051 / NBRC 15346 / NCIMB 9279 / VKM B-1422 / R1).